A 246-amino-acid polypeptide reads, in one-letter code: UDP-N-acetyl-D-mannosaminuronic acid transferase (246 aa).

It belongs to the glycosyltransferase 26 family.

It carries out the reaction UDP-N-acetyl-alpha-D-mannosaminouronate + N-acetyl-alpha-D-glucosaminyl-di-trans,octa-cis-undecaprenyl diphosphate = beta-D-ManNAcA-(1-&gt;4)-alpha-D-GlcNAc-di-trans,octa-cis-undecaprenyl diphosphate + UDP + H(+). It participates in bacterial outer membrane biogenesis; enterobacterial common antigen biosynthesis. Its function is as follows. Catalyzes the synthesis of Und-PP-GlcNAc-ManNAcA (Lipid II), the second lipid-linked intermediate involved in enterobacterial common antigen (ECA) synthesis. The polypeptide is UDP-N-acetyl-D-mannosaminuronic acid transferase (Salmonella choleraesuis (strain SC-B67)).